The chain runs to 278 residues: ABC transporter I family member 11, chloroplastic (278 aa).

Residues 1–49 (MAVSTFSSPTPVFGIAEPPASFSSTAIGWKQPLRFRRTKKPRVISCDYS) constitute a chloroplast transit peptide. In terms of domain architecture, ABC transporter spans 51 to 278 (IEVRDVCYRP…GVLVAERPPL (228 aa)). 85–92 (GKSGSGKT) provides a ligand contact to ATP.

Belongs to the ABC transporter superfamily. ABCI family.

It localises to the plastid. It is found in the chloroplast. This Arabidopsis thaliana (Mouse-ear cress) protein is ABC transporter I family member 11, chloroplastic (ABCI11).